Reading from the N-terminus, the 207-residue chain is Alpha-1-acid glycoprotein 1 (207 aa).

Positions 1-18 (MALHMILVMLSLLPLLEA) are cleaved as a signal peptide. The residue at position 19 (Gln19) is a Pyrrolidone carboxylic acid. Asn25, Asn34, Asn76, Asn94, and Asn104 each carry an N-linked (GlcNAc...) asparagine glycan. Cys91 and Cys184 are oxidised to a cystine.

It belongs to the calycin superfamily. Lipocalin family. Expressed by the liver and secreted in plasma.

The protein resides in the secreted. Functions as a transport protein in the blood stream. Binds various ligands in the interior of its beta-barrel domain. Appears to function in modulating the activity of the immune system during the acute-phase reaction. This Mus caroli (Ryukyu mouse) protein is Alpha-1-acid glycoprotein 1 (Orm1).